We begin with the raw amino-acid sequence, 69 residues long: Large ribosomal subunit protein bL31 (69 aa).

Positions 16, 18, 37, and 40 each coordinate Zn(2+).

It belongs to the bacterial ribosomal protein bL31 family. Type A subfamily. As to quaternary structure, part of the 50S ribosomal subunit. Zn(2+) is required as a cofactor.

In terms of biological role, binds the 23S rRNA. The polypeptide is Large ribosomal subunit protein bL31 (Teredinibacter turnerae (strain ATCC 39867 / T7901)).